A 190-amino-acid chain; its full sequence is Orotate phosphoribosyltransferase (190 aa).

5-phospho-alpha-D-ribose 1-diphosphate is bound at residue 114–122; the sequence is EDVVTTGGS. 2 residues coordinate orotate: threonine 118 and arginine 146.

The protein belongs to the purine/pyrimidine phosphoribosyltransferase family. PyrE subfamily. As to quaternary structure, homodimer. Mg(2+) serves as cofactor.

It carries out the reaction orotidine 5'-phosphate + diphosphate = orotate + 5-phospho-alpha-D-ribose 1-diphosphate. It functions in the pathway pyrimidine metabolism; UMP biosynthesis via de novo pathway; UMP from orotate: step 1/2. Catalyzes the transfer of a ribosyl phosphate group from 5-phosphoribose 1-diphosphate to orotate, leading to the formation of orotidine monophosphate (OMP). The chain is Orotate phosphoribosyltransferase from Caldanaerobacter subterraneus subsp. tengcongensis (strain DSM 15242 / JCM 11007 / NBRC 100824 / MB4) (Thermoanaerobacter tengcongensis).